We begin with the raw amino-acid sequence, 513 residues long: ATP synthase subunit alpha (513 aa).

ATP is bound at residue 169–176 (GDRQTGKT).

Belongs to the ATPase alpha/beta chains family. As to quaternary structure, F-type ATPases have 2 components, CF(1) - the catalytic core - and CF(0) - the membrane proton channel. CF(1) has five subunits: alpha(3), beta(3), gamma(1), delta(1), epsilon(1). CF(0) has three main subunits: a(1), b(2) and c(9-12). The alpha and beta chains form an alternating ring which encloses part of the gamma chain. CF(1) is attached to CF(0) by a central stalk formed by the gamma and epsilon chains, while a peripheral stalk is formed by the delta and b chains.

Its subcellular location is the cell inner membrane. The catalysed reaction is ATP + H2O + 4 H(+)(in) = ADP + phosphate + 5 H(+)(out). Functionally, produces ATP from ADP in the presence of a proton gradient across the membrane. The alpha chain is a regulatory subunit. This chain is ATP synthase subunit alpha, found in Enterobacter sp. (strain 638).